Reading from the N-terminus, the 173-residue chain is ATP synthase subunit b (173 aa).

A helical membrane pass occupies residues 12-32 (LDVNPGLVVWTLITFLVVVLV).

The protein belongs to the ATPase B chain family. As to quaternary structure, F-type ATPases have 2 components, F(1) - the catalytic core - and F(0) - the membrane proton channel. F(1) has five subunits: alpha(3), beta(3), gamma(1), delta(1), epsilon(1). F(0) has three main subunits: a(1), b(2) and c(10-14). The alpha and beta chains form an alternating ring which encloses part of the gamma chain. F(1) is attached to F(0) by a central stalk formed by the gamma and epsilon chains, while a peripheral stalk is formed by the delta and b chains.

Its subcellular location is the cell inner membrane. In terms of biological role, f(1)F(0) ATP synthase produces ATP from ADP in the presence of a proton or sodium gradient. F-type ATPases consist of two structural domains, F(1) containing the extramembraneous catalytic core and F(0) containing the membrane proton channel, linked together by a central stalk and a peripheral stalk. During catalysis, ATP synthesis in the catalytic domain of F(1) is coupled via a rotary mechanism of the central stalk subunits to proton translocation. Functionally, component of the F(0) channel, it forms part of the peripheral stalk, linking F(1) to F(0). The protein is ATP synthase subunit b of Leptospira borgpetersenii serovar Hardjo-bovis (strain JB197).